A 300-amino-acid chain; its full sequence is Inosose dehydratase (300 aa).

Belongs to the IolE/MocC family. It depends on glutathione as a cofactor. Co(2+) is required as a cofactor. Requires Mn(2+) as cofactor.

The catalysed reaction is scyllo-inosose = 3D-3,5/4-trihydroxycyclohexane-1,2-dione + H2O. Its pathway is polyol metabolism; myo-inositol degradation into acetyl-CoA; acetyl-CoA from myo-inositol: step 2/7. Functionally, catalyzes the dehydration of inosose (2-keto-myo-inositol, 2KMI or 2,4,6/3,5-pentahydroxycyclohexanone) to 3D-(3,5/4)-trihydroxycyclohexane-1,2-dione (D-2,3-diketo-4-deoxy-epi-inositol). The sequence is that of Inosose dehydratase from Bacillus licheniformis (strain ATCC 14580 / DSM 13 / JCM 2505 / CCUG 7422 / NBRC 12200 / NCIMB 9375 / NCTC 10341 / NRRL NRS-1264 / Gibson 46).